The following is a 334-amino-acid chain: Gap junction alpha-2 protein (334 aa).

At 1–12 (MAGWELLKLLLD) the chain is on the cytoplasmic side. Residues 13–35 (DVQEHSTLIGKVWLTVLFIFRIF) traverse the membrane as a helical segment. Over 36–75 (ILSVAGESVWTDEQSDFICNTQQPGCTNVCYDQAFPISHV) the chain is Extracellular. Residues 76–98 (RYWVLQFLFVSTPTLIYLGHMVY) traverse the membrane as a helical segment. The Cytoplasmic segment spans residues 99–153 (LSKKEEKERQKENESRILVANEAQTEVHSSATKKIRIQGPLMCTYTTSVVFKSIF). A helical transmembrane segment spans residues 154–176 (EAGFLLGQWYIYGFVMSPIFVCE). The Extracellular segment spans residues 177–207 (RIPCKHKVECFVSRPMEKTIFIIFMLVVSLI). The helical transmembrane segment at 208-230 (SLLLNLMELIHLSFKCFQHGIKE) threads the bilayer. The Cytoplasmic segment spans residues 231 to 334 (GATCSPTGIP…HQTSSKQQYV (104 aa)).

This sequence belongs to the connexin family. Alpha-type (group II) subfamily. In terms of assembly, a connexon is composed of a hexamer of connexins. In terms of tissue distribution, resides primarily in the ovary, oocytes and early embryos.

It localises to the cell membrane. The protein localises to the cell junction. It is found in the gap junction. One gap junction consists of a cluster of closely packed pairs of transmembrane channels, the connexons, through which materials of low MW diffuse from one cell to a neighboring cell. In Xenopus laevis (African clawed frog), this protein is Gap junction alpha-2 protein (gja2).